Reading from the N-terminus, the 57-residue chain is Large ribosomal subunit protein bL32c (57 aa).

The protein belongs to the bacterial ribosomal protein bL32 family.

The protein resides in the plastid. Its subcellular location is the chloroplast. This chain is Large ribosomal subunit protein bL32c, found in Liriodendron tulipifera (Tuliptree).